The primary structure comprises 310 residues: Bifunctional phosphoglucose/phosphomannose isomerase (310 aa).

The SIS domain occupies 22–152 (FDGSFRTGTF…IRPKHEDIEE (131 aa)). Residues glycine 41, serine 42, serine 80, serine 82, threonine 85, and arginine 128 each contribute to the D-fructose 6-phosphate site. Glutamate 202 functions as the Proton acceptor in the catalytic mechanism. 2 residues coordinate D-fructose 6-phosphate: histidine 218 and lysine 306. Histidine 218 functions as the Proton donor in the catalytic mechanism. Lysine 306 serves as the catalytic Proton acceptor.

It belongs to the PGI/PMI family. In terms of assembly, homodimer.

It carries out the reaction alpha-D-glucose 6-phosphate = beta-D-fructose 6-phosphate. The catalysed reaction is D-mannose 6-phosphate = D-fructose 6-phosphate. Inhibited by low concentrations of erythrose 4-phosphate and 6-phosphogluconate. Its function is as follows. Dual specificity isomerase that catalyzes the isomerization of both glucose-6-phosphate and mannose-6-phosphate to fructose-6-phosphate with similar catalytic efficiency. This Thermoplasma acidophilum (strain ATCC 25905 / DSM 1728 / JCM 9062 / NBRC 15155 / AMRC-C165) protein is Bifunctional phosphoglucose/phosphomannose isomerase.